Consider the following 288-residue polypeptide: Undecaprenyl-diphosphatase (288 aa).

8 helical membrane passes run 25 to 45 (GITE…NEFL), 53 to 73 (FIDM…MVIY), 93 to 113 (WKLW…GLLL), 121 to 141 (LSNF…FIWI), 171 to 191 (VLSI…GIIV), 196 to 216 (SVAA…YSGL), 231 to 251 (GQAA…LFVI), and 263 to 283 (FTVF…YGAV).

It belongs to the UppP family.

It is found in the cell membrane. It carries out the reaction di-trans,octa-cis-undecaprenyl diphosphate + H2O = di-trans,octa-cis-undecaprenyl phosphate + phosphate + H(+). Catalyzes the dephosphorylation of undecaprenyl diphosphate (UPP). Confers resistance to bacitracin. This is Undecaprenyl-diphosphatase from Streptococcus thermophilus (strain ATCC BAA-250 / LMG 18311).